The chain runs to 369 residues: GTPase Obg (369 aa).

The Obg domain occupies 1-159 (MKFVDEVTID…KNLKLELRVL (159 aa)). An OBG-type G domain is found at 160 to 334 (ADVGLLGMPN…LIHAIYSHVA (175 aa)). Residues 166-173 (GMPNAGKS), 191-195 (FTTLH), 213-216 (DIPG), 284-287 (NKLD), and 315-317 (SAL) contribute to the GTP site. Mg(2+) is bound by residues Ser-173 and Thr-193. The segment at 339–369 (QPEEVPDPRFTTNEDLSEAAPAPDRDDPRFR) is disordered.

The protein belongs to the TRAFAC class OBG-HflX-like GTPase superfamily. OBG GTPase family. As to quaternary structure, monomer. Mg(2+) serves as cofactor.

Its subcellular location is the cytoplasm. Its function is as follows. An essential GTPase which binds GTP, GDP and possibly (p)ppGpp with moderate affinity, with high nucleotide exchange rates and a fairly low GTP hydrolysis rate. Plays a role in control of the cell cycle, stress response, ribosome biogenesis and in those bacteria that undergo differentiation, in morphogenesis control. In Leptothrix cholodnii (strain ATCC 51168 / LMG 8142 / SP-6) (Leptothrix discophora (strain SP-6)), this protein is GTPase Obg.